The primary structure comprises 438 residues: MSLIPQEIIRRKRDGLSLAPQEIAAFIEALSKDGISEGQAAAFAMAVFFRGMNRDEMVALTLAMRDSGDVLSWRDIGRPVADKHSTGGVGDNVSLMLAPIVAACGLAVPMISGRGLGHTGGTLDKLEAIPGYDVMPDEALFRRTVQSVGCAIIGQTGDLAPADKRLYAIRDVTATVDSIPLITASILSKKLAAGLETLVLDVKVGNGAFMQSLEDARILARALVDVANGAGLPTTALITDMNQPLCDAAGNAVEIVNCLEFLAGGKAGTRLEKVVLSFAAEMLVQARKAATLEEGEALASAALSSGRAMEIFARMVSVLGGPSDFIENPSRYLACAPIILPVPAARSGWLASCATRDLGMVVVELGGGRTKPSDTINPAVGISDILPLGVRVEKGEPIAVVHAASSEDAERAVKRIEDCFGIADNAPEIAASVLERIT.

This sequence belongs to the thymidine/pyrimidine-nucleoside phosphorylase family. As to quaternary structure, homodimer.

It catalyses the reaction thymidine + phosphate = 2-deoxy-alpha-D-ribose 1-phosphate + thymine. It functions in the pathway pyrimidine metabolism; dTMP biosynthesis via salvage pathway; dTMP from thymine: step 1/2. Its function is as follows. The enzymes which catalyze the reversible phosphorolysis of pyrimidine nucleosides are involved in the degradation of these compounds and in their utilization as carbon and energy sources, or in the rescue of pyrimidine bases for nucleotide synthesis. This chain is Thymidine phosphorylase, found in Agrobacterium fabrum (strain C58 / ATCC 33970) (Agrobacterium tumefaciens (strain C58)).